The sequence spans 72 residues: MKNSESLKEFKKLNSDQITEKIDQLRKDLFDLRFKQATRQLNETHKFKIIKKQVAQLLTLSKSQSASQTTSD.

The protein belongs to the universal ribosomal protein uL29 family.

The polypeptide is Large ribosomal subunit protein uL29 (Prochlorococcus marinus (strain MIT 9215)).